A 714-amino-acid polypeptide reads, in one-letter code: Glycine--tRNA ligase beta subunit (714 aa).

Belongs to the class-II aminoacyl-tRNA synthetase family. In terms of assembly, tetramer of two alpha and two beta subunits.

It is found in the cytoplasm. It carries out the reaction tRNA(Gly) + glycine + ATP = glycyl-tRNA(Gly) + AMP + diphosphate. In Rhodospirillum centenum (strain ATCC 51521 / SW), this protein is Glycine--tRNA ligase beta subunit.